A 675-amino-acid chain; its full sequence is Potassium-transporting ATPase ATP-binding subunit (675 aa).

Transmembrane regions (helical) follow at residues 34-54, 65-85, 216-236, and 245-265; these read IMFVVEVGMILTLILICFPDI, LITIFIILLITILFANFSEAF, IALFTLLTTLTIIFLVVIVTL, and LILPIAMLIALTVCLIPTTIG. Catalysis depends on aspartate 304, which acts as the 4-aspartylphosphate intermediate. Residues aspartate 341, glutamate 345, 372–379, and lysine 390 each bind ATP; that span reads FTAETRMS. Positions 513 and 517 each coordinate Mg(2+). 3 helical membrane-spanning segments follow: residues 569 to 591, 611 to 631, and 644 to 664; these read ALTTFSLANDVAKYFAILPALMM, AIISALIFNALIIVALIPIAM, and IFINNMLIYGLGGLIVPFLGI.

Belongs to the cation transport ATPase (P-type) (TC 3.A.3) family. Type IA subfamily. In terms of assembly, the system is composed of three essential subunits: KdpA, KdpB and KdpC.

It is found in the cell membrane. It carries out the reaction K(+)(out) + ATP + H2O = K(+)(in) + ADP + phosphate + H(+). Functionally, part of the high-affinity ATP-driven potassium transport (or Kdp) system, which catalyzes the hydrolysis of ATP coupled with the electrogenic transport of potassium into the cytoplasm. This subunit is responsible for energy coupling to the transport system and for the release of the potassium ions to the cytoplasm. This chain is Potassium-transporting ATPase ATP-binding subunit, found in Staphylococcus aureus (strain bovine RF122 / ET3-1).